A 232-amino-acid chain; its full sequence is Glycerol-3-phosphate acyltransferase (232 aa).

Helical transmembrane passes span 4-24 (FLAIITVAYLIGSIPTSIIAG), 56-76 (AVTLIDIAKGTIAAVPVVAFF), 90-110 (IALNLIAGMSAVIGHVFTVFA), 124-144 (MLIGIAPISMLMVIGVFILAI), 147-167 (TRYVSVGSILAAIAFPLIIAI), and 191-211 (SLDYHLLIFGGIVAAAIIYTH).

This sequence belongs to the PlsY family. In terms of assembly, probably interacts with PlsX.

The protein localises to the cell inner membrane. The catalysed reaction is an acyl phosphate + sn-glycerol 3-phosphate = a 1-acyl-sn-glycero-3-phosphate + phosphate. Its pathway is lipid metabolism; phospholipid metabolism. Catalyzes the transfer of an acyl group from acyl-phosphate (acyl-PO(4)) to glycerol-3-phosphate (G3P) to form lysophosphatidic acid (LPA). This enzyme utilizes acyl-phosphate as fatty acyl donor, but not acyl-CoA or acyl-ACP. This Chlorobaculum parvum (strain DSM 263 / NCIMB 8327) (Chlorobium vibrioforme subsp. thiosulfatophilum) protein is Glycerol-3-phosphate acyltransferase.